Here is a 302-residue protein sequence, read N- to C-terminus: Cyclopropane mycolic acid synthase 2 (302 aa).

Residues 41 to 42 (YS), 76 to 84 (LLDIGCGWG), 102 to 107 (TLSENQ), and 131 to 132 (WE) each bind S-adenosyl-L-methionine. Residue cysteine 284 is part of the active site.

The protein belongs to the CFA/CMAS family. As to quaternary structure, homodimer.

It is found in the cytoplasm. The enzyme catalyses a 1-acyl-2-(9Z)-enoyl-sn-glycero-3-phospholipid + S-adenosyl-L-methionine = a 1-acyl-2-(9-cyclopronane)-acyl-sn-glycero-3-phospholipid + S-adenosyl-L-homocysteine + H(+). It functions in the pathway lipid metabolism; mycolic acid biosynthesis. In terms of biological role, catalyzes the formation of trans cyclopropanated ketomycolate or methoxymycolate through the conversion of a double bond to a cyclopropane ring at the proximal position of an oxygenated mycolic acid via the transfer of a methylene group from S-adenosyl-L-methionine. In the absence of MmaA2, CmaA2 has a non-specific cis-cyclopropanating activity and is able to catalyze the conversion of a double bond to a cis cyclopropane ring at the distal position of an alpha mycolic acid. Cyclopropanated mycolic acids are key factors participating in cell envelope permeability, host immunomodulation and persistence. The polypeptide is Cyclopropane mycolic acid synthase 2 (cmaA2) (Mycobacterium bovis (strain ATCC BAA-935 / AF2122/97)).